A 367-amino-acid polypeptide reads, in one-letter code: Peptide chain release factor 2 (367 aa).

An N5-methylglutamine modification is found at Gln-249.

It belongs to the prokaryotic/mitochondrial release factor family. Post-translationally, methylated by PrmC. Methylation increases the termination efficiency of RF2.

It is found in the cytoplasm. Functionally, peptide chain release factor 2 directs the termination of translation in response to the peptide chain termination codons UGA and UAA. In Thermotoga sp. (strain RQ2), this protein is Peptide chain release factor 2.